A 205-amino-acid chain; its full sequence is Methyltransferase-like 26 B (205 aa).

This sequence belongs to the UPF0585 family.

The polypeptide is Methyltransferase-like 26 B (Danio rerio (Zebrafish)).